The following is a 512-amino-acid chain: tRNA modification GTPase gtpbp3, mitochondrial (512 aa).

In terms of domain architecture, TrmE-type G spans 246–434 (GANIAIVGPP…LLNLLKLNLK (189 aa)). GTP-binding positions include 253–260 (GPPNAGKS), 300–304 (DTAGL), and 375–378 (NKSD).

The protein belongs to the TRAFAC class TrmE-Era-EngA-EngB-Septin-like GTPase superfamily. TrmE GTPase family.

It is found in the mitochondrion. In terms of biological role, GTPase involved in the 5-carboxymethylaminomethyl modification (mnm(5)s(2)U34) of the wobble uridine base in mitochondrial tRNAs. In Dictyostelium discoideum (Social amoeba), this protein is tRNA modification GTPase gtpbp3, mitochondrial (gtpbp3).